Consider the following 556-residue polypeptide: Zinc finger protein 18 (556 aa).

Positions 41–123 (RQLFRQFRYQ…TLVESLKGDP (83 aa)) constitute an SCAN box domain. Residues 169-195 (QDLPLQNTSSAPGELLSHGVKEESDLE) form a disordered region. The region spanning 218–291 (EVGTALLPSL…HLHSAEKMAR (74 aa)) is the KRAB domain. C2H2-type zinc fingers lie at residues 415 to 437 (PTCR…QRTH), 443 to 465 (FHCR…QRTH), 471 to 493 (CKCD…EKIH), 499 to 521 (YKCP…QRVH), and 527 to 549 (YKCT…QRSH).

Belongs to the krueppel C2H2-type zinc-finger protein family.

The protein resides in the nucleus. Functionally, may be involved in transcriptional regulation. The polypeptide is Zinc finger protein 18 (Znf18) (Rattus norvegicus (Rat)).